We begin with the raw amino-acid sequence, 515 residues long: ATP synthase subunit alpha (515 aa).

171–178 (GDRQTGKT) lines the ATP pocket.

This sequence belongs to the ATPase alpha/beta chains family. In terms of assembly, F-type ATPases have 2 components, CF(1) - the catalytic core - and CF(0) - the membrane proton channel. CF(1) has five subunits: alpha(3), beta(3), gamma(1), delta(1), epsilon(1). CF(0) has three main subunits: a(1), b(2) and c(9-12). The alpha and beta chains form an alternating ring which encloses part of the gamma chain. CF(1) is attached to CF(0) by a central stalk formed by the gamma and epsilon chains, while a peripheral stalk is formed by the delta and b chains.

Its subcellular location is the cell membrane. It catalyses the reaction ATP + H2O + 4 H(+)(in) = ADP + phosphate + 5 H(+)(out). In terms of biological role, produces ATP from ADP in the presence of a proton gradient across the membrane. The alpha chain is a regulatory subunit. The sequence is that of ATP synthase subunit alpha from Stenotrophomonas maltophilia (strain K279a).